Consider the following 87-residue polypeptide: DNA-directed RNA polymerase subunit omega (87 aa).

It belongs to the RNA polymerase subunit omega family. The RNAP catalytic core consists of 2 alpha, 1 beta, 1 beta' and 1 omega subunit. When a sigma factor is associated with the core the holoenzyme is formed, which can initiate transcription.

The enzyme catalyses RNA(n) + a ribonucleoside 5'-triphosphate = RNA(n+1) + diphosphate. Promotes RNA polymerase assembly. Latches the N- and C-terminal regions of the beta' subunit thereby facilitating its interaction with the beta and alpha subunits. This chain is DNA-directed RNA polymerase subunit omega, found in Pseudomonas putida (strain W619).